The primary structure comprises 44 residues: GGKCTVDWGGQGGGRRLPSPLFCCYKPTRICYLNQETCETETCP.

In terms of processing, disulfide bonds. Expressed in flowers but not in leaves, seeds or roots (at protein level).

In terms of biological role, antimicrobial peptide. Active against fungal species B.cinerea (IC(50)=5.2 uM), A.niger (IC(50)=2.6 uM) and B.sorokinina (IC(50)=5.2 uM) but not against F.oxysporum, F.graminearum and P.debaryanum at concentrations below 10 uM. Inhibits growth of P.infestans at concentration between 1.3 uM and 5.2 uM. Active against bacterial species P.syringae, B.subtilis, X.campestris and C.michiganense. The protein is Antimicrobial peptide 2 of Taraxacum officinale (Common dandelion).